An 83-amino-acid polypeptide reads, in one-letter code: Small ribosomal subunit protein uS17 (83 aa).

The protein belongs to the universal ribosomal protein uS17 family. In terms of assembly, part of the 30S ribosomal subunit.

One of the primary rRNA binding proteins, it binds specifically to the 5'-end of 16S ribosomal RNA. The sequence is that of Small ribosomal subunit protein uS17 from Campylobacter curvus (strain 525.92).